The sequence spans 93 residues: Large ribosomal subunit protein eL42 (93 aa).

The Zn(2+) site is built by cysteine 11 and cysteine 14. The C4-type zinc finger occupies 11–75; the sequence is CPNCDEHHQL…TDLKYRCSEC (65 aa). The segment at 24 to 62 is disordered; the sequence is KVRSGRSSGMKWDARRTKRANASIGNHGRFSKVPVGNKP. Zn(2+)-binding residues include cysteine 72 and cysteine 75.

Belongs to the eukaryotic ribosomal protein eL42 family. Part of the 50S ribosomal subunit. Requires Zn(2+) as cofactor.

Binds to the 23S rRNA. The chain is Large ribosomal subunit protein eL42 from Halobacterium salinarum (strain ATCC 700922 / JCM 11081 / NRC-1) (Halobacterium halobium).